A 145-amino-acid chain; its full sequence is Protein SprT-like (145 aa).

The SprT-like domain occupies 4–140 (TNYVQEVSLA…VCGNCHGKLM (137 aa)). His-64 provides a ligand contact to Zn(2+). The active site involves Glu-65. Zn(2+) is bound at residue His-68.

It belongs to the SprT family. Requires Zn(2+) as cofactor.

Its subcellular location is the cytoplasm. The chain is Protein SprT-like from Streptococcus pyogenes serotype M1.